The primary structure comprises 257 residues: Phycoerythrobilin:ferredoxin oxidoreductase (257 aa).

This sequence belongs to the HY2 family.

The enzyme catalyses (3Z)-phycoerythrobilin + oxidized 2[4Fe-4S]-[ferredoxin] = 15,16-dihydrobiliverdin + reduced 2[4Fe-4S]-[ferredoxin] + 2 H(+). Functionally, catalyzes the two-electron reduction of the C2 and C3(1) diene system of 15,16-dihydrobiliverdin. This is Phycoerythrobilin:ferredoxin oxidoreductase (pebB) from Synechococcus sp. (strain WH8020).